The primary structure comprises 243 residues: Calcium-binding protein LPS1-beta (243 aa).

EF-hand domains lie at 15–49, 47–82, 85–120, 121–156, 157–189, 191–226, and 227–243; these read EVIDAMKQEFKDNYDTNKDGTVSCAELAKLMDCPE, CPEEEAQRIITGVDVNCDGRMQFDEFLLYMEGYTKE, YSSDEIKQMFDDLDKDGNGRISPDELSKGVGEISTK, LVEGMANKLIQEADKDGDGHVNMEEFVDTLVAKLPL, CFKKCFHEDFDKNGDGSLTNAEMSQLLNRNLPG, YSEELINEMISRVDLNGDGRVQFGEFLMHAQNLSKD, and DIKNQFMAIDKDKNGKI. Residues Asp29, Asn31, Asp33, Thr35, Glu40, Asp60, Asn62, Asp64, Arg66, Glu71, Asp98, Asp100, Asn102, Arg104, Glu109, Asp134, Asp136, Asp138, His140, Glu145, Asp167, Asn169, Asp171, Ser173, Glu178, Asp204, Asn206, Asp208, Arg210, and Glu215 each contribute to the Ca(2+) site.

As to expression, aboral ectoderm, a squamous epithelium covering the surface of the late stage embryo and larva.

In terms of biological role, calcium-binding protein involved in larval development and metamorphosis. Likely to function as calcium buffers mediating the transport of calcium from the sea water to the blastocoel where calcium is required for skeleton formation. The chain is Calcium-binding protein LPS1-beta from Lytechinus pictus (Painted sea urchin).